We begin with the raw amino-acid sequence, 458 residues long: Transcription factor bHLH10 (458 aa).

Positions 1 to 49 are disordered; it reads MEEERESLYEEMGCFDPNTPAEVTVESSFSQAEPPPPPPQVLVAGSTSN. A bHLH domain is found at 243–292; the sequence is SRKSRTSPTERERRVHFNDRFFDLKNLIPNPTKIDRASIVGEAIDYIKEL. Positions 315–338 are disordered; sequence KRARVGEGGGGEDQEEEEDTVNYK. Positions 324-334 are enriched in acidic residues; sequence GGEDQEEEEDT.

Homodimer.

It localises to the nucleus. In Arabidopsis thaliana (Mouse-ear cress), this protein is Transcription factor bHLH10 (BHLH10).